The chain runs to 491 residues: 4,4'-diapolycopen-4-al dehydrogenase (491 aa).

Glu-208 is an active-site residue.

The protein belongs to the carotenoid/retinoid oxidoreductase family. CrtN subfamily.

The enzyme catalyses all-trans-4,4'-diapolycopen-4-al + A + H2O = all-trans-4,4'-diapolycopen-4-oate + AH2 + H(+). It participates in carotenoid biosynthesis. Its function is as follows. Involved in the biosynthesis of the major C30 carotenoid methyl 4'-[6-O-(acylglycosyl)oxy]-4,4'-diapolycopen-4-oic acid via 4,4'-diapolycopen-4-oic acid intermediate. Catalyzes the oxidation of 4,4'-diapolycopen-4-al to yield 4,4'-diapolycopen-4-oic acid. This Metabacillus indicus (Bacillus indicus) protein is 4,4'-diapolycopen-4-al dehydrogenase.